Consider the following 184-residue polypeptide: Bifunctional protein PyrR (184 aa).

The short motif at 98–110 is the PRPP-binding element; that stretch reads VVLVDDVLYTGRT.

The protein belongs to the purine/pyrimidine phosphoribosyltransferase family. PyrR subfamily.

It carries out the reaction UMP + diphosphate = 5-phospho-alpha-D-ribose 1-diphosphate + uracil. Regulates the transcription of the pyrimidine nucleotide (pyr) operon in response to exogenous pyrimidines. Functionally, also displays a weak uracil phosphoribosyltransferase activity which is not physiologically significant. The protein is Bifunctional protein PyrR of Roseiflexus castenholzii (strain DSM 13941 / HLO8).